A 141-amino-acid polypeptide reads, in one-letter code: MKAVLQRVKHSSVSVEGKLINEINEGLNVLIGFEKDDNDEKLKKMAKKIVSLRIFGERFEKSVADIKGEILLIPNFTIPAITKKGTRPNFQNSMQPSTAKEFYDKMVKELNNYIPTKAGVFGAEMQVEITNNGPVTIILEV.

A Gly-cisPro motif, important for rejection of L-amino acids motif is present at residues 133–134 (GP).

It belongs to the DTD family. As to quaternary structure, homodimer.

The protein resides in the cytoplasm. It catalyses the reaction glycyl-tRNA(Ala) + H2O = tRNA(Ala) + glycine + H(+). It carries out the reaction a D-aminoacyl-tRNA + H2O = a tRNA + a D-alpha-amino acid + H(+). Functionally, an aminoacyl-tRNA editing enzyme that deacylates mischarged D-aminoacyl-tRNAs. Also deacylates mischarged glycyl-tRNA(Ala), protecting cells against glycine mischarging by AlaRS. Acts via tRNA-based rather than protein-based catalysis; rejects L-amino acids rather than detecting D-amino acids in the active site. By recycling D-aminoacyl-tRNA to D-amino acids and free tRNA molecules, this enzyme counteracts the toxicity associated with the formation of D-aminoacyl-tRNA entities in vivo and helps enforce protein L-homochirality. This is D-aminoacyl-tRNA deacylase from Nautilia profundicola (strain ATCC BAA-1463 / DSM 18972 / AmH).